Consider the following 194-residue polypeptide: Recombination protein RecR (194 aa).

The C4-type zinc-finger motif lies at 53–68; sequence CEICFNLDVTSPCSIC. In terms of domain architecture, Toprim spans 76-171; sequence SLLCIVEELG…KVTRLACGIP (96 aa).

This sequence belongs to the RecR family.

Its function is as follows. May play a role in DNA repair. It seems to be involved in an RecBC-independent recombinational process of DNA repair. It may act with RecF and RecO. The chain is Recombination protein RecR from Anaplasma phagocytophilum (strain HZ).